The sequence spans 187 residues: Peptide deformylase (187 aa).

Fe cation is bound by residues cysteine 94 and histidine 136. Glutamate 137 is a catalytic residue. Residue histidine 140 coordinates Fe cation.

This sequence belongs to the polypeptide deformylase family. The cofactor is Fe(2+).

It catalyses the reaction N-terminal N-formyl-L-methionyl-[peptide] + H2O = N-terminal L-methionyl-[peptide] + formate. In terms of biological role, removes the formyl group from the N-terminal Met of newly synthesized proteins. Requires at least a dipeptide for an efficient rate of reaction. N-terminal L-methionine is a prerequisite for activity but the enzyme has broad specificity at other positions. The sequence is that of Peptide deformylase from Chlorobaculum parvum (strain DSM 263 / NCIMB 8327) (Chlorobium vibrioforme subsp. thiosulfatophilum).